Consider the following 779-residue polypeptide: Transcription factor SPT20 homolog (779 aa).

Serine 296 is modified (phosphoserine). 2 disordered regions span residues 373 to 392 (DEESDSQMSPSHSSTDDHSN) and 420 to 507 (PVKM…IPRK). The span at 424-437 (SHSSSGSASLSQVS) shows a compositional bias: low complexity. Polar residues predominate over residues 445-454 (TETVSVQSSV). Over residues 470–479 (SSSGNSSSGN) the composition is skewed to low complexity. Threonine 494 carries the phosphothreonine modification. A phosphoserine mark is found at serine 519 and serine 524. 2 disordered regions span residues 641 to 677 (QLSQFTPQQPQQPTTCSPQQPGEQGSEQGSTSQEQAL) and 755 to 779 (LHHHRHTGSQSKSKMKRGTPTTPKF). Residues 755 to 771 (LHHHRHTGSQSKSKMKR) are compositionally biased toward basic residues.

This sequence belongs to the SPT20 family. As to quaternary structure, interacts with MAPK14. Interacts with ATG9A. Highly expressed in testis, moderately in brain and pituitary gland. Expressed in several fetal tissues, including lung, brain, thymus and kidney. Expression is down-regulated in malignant prostate tissues.

It is found in the nucleus. Required for MAP kinase p38 (MAPK11, MAPK12, MAPK13 and/or MAPK14) activation during gastrulation. Required for down-regulation of E-cadherin during gastrulation by regulating E-cadherin protein level downstream from NCK-interacting kinase (NIK) and independently of the regulation of transcription by FGF signaling and Snail. Required for starvation-induced ATG9A trafficking during autophagy. The protein is Transcription factor SPT20 homolog (SUPT20H) of Homo sapiens (Human).